An 82-amino-acid chain; its full sequence is RNA-binding protein Hfq (82 aa).

In terms of domain architecture, Sm spans 11-71; that stretch reads DTFLNHVRKT…ISTIMPGAPI (61 aa).

It belongs to the Hfq family. Homohexamer.

In terms of biological role, RNA chaperone that binds small regulatory RNA (sRNAs) and mRNAs to facilitate mRNA translational regulation in response to envelope stress, environmental stress and changes in metabolite concentrations. Also binds with high specificity to tRNAs. This Rhodopseudomonas palustris (strain BisA53) protein is RNA-binding protein Hfq.